A 74-amino-acid chain; its full sequence is VQVVVLALVAQVTLSQHWSYGWLPGGKRSVGELEATIKMMDTGGVVVLPEETSAHVSERLRPYDVILKKWMPHK.

The signal sequence occupies residues 1 to 15; it reads VQVVVLALVAQVTLS. At Gln16 the chain carries Pyrrolidone carboxylic acid. Gly25 is modified (glycine amide).

It belongs to the GnRH family.

The protein localises to the secreted. In terms of biological role, stimulates the secretion of gonadotropins. This Oncorhynchus mykiss (Rainbow trout) protein is Progonadoliberin-3 (gnrh3).